We begin with the raw amino-acid sequence, 183 residues long: MHLLPELASHHAVSIPELLVSRDERQARQHAWLKRHPVPLVSFTVVAPGPIKDSEVTRRIFNHGVTALRALAAKQGWQIQEQAALVSASGPEGMLSIAAPARDLKLATIELEHNHPLGRLWDIDVLTPEGDILSRRDYSLPPRRCLLCEQSAAVCARGKTHQLTDLLNRMEALLNDVDACNVN.

It belongs to the CitX family.

The catalysed reaction is apo-[citrate lyase ACP] + 2'-(5''-triphospho-alpha-D-ribosyl)-3'-dephospho-CoA = holo-[citrate lyase ACP] + diphosphate. Its function is as follows. Transfers 2-(5''-triphosphoribosyl)-3'-dephosphocoenzyme-A on a serine residue to the apo-acyl carrier protein (gamma chain) of the citrate lyase to yield holo-acyl carrier protein. The protein is Apo-citrate lyase phosphoribosyl-dephospho-CoA transferase of Escherichia coli O7:K1 (strain IAI39 / ExPEC).